Reading from the N-terminus, the 611-residue chain is tRNA uridine 5-carboxymethylaminomethyl modification enzyme MnmG (611 aa).

14 to 19 (GAGHAG) is a binding site for FAD. Residue 274 to 288 (GPRYCPSIEDKIVKF) coordinates NAD(+).

This sequence belongs to the MnmG family. In terms of assembly, homodimer. Heterotetramer of two MnmE and two MnmG subunits. FAD is required as a cofactor.

It localises to the cytoplasm. Functionally, NAD-binding protein involved in the addition of a carboxymethylaminomethyl (cmnm) group at the wobble position (U34) of certain tRNAs, forming tRNA-cmnm(5)s(2)U34. In Chlamydia abortus (strain DSM 27085 / S26/3) (Chlamydophila abortus), this protein is tRNA uridine 5-carboxymethylaminomethyl modification enzyme MnmG.